We begin with the raw amino-acid sequence, 771 residues long: U3 small nucleolar RNA-associated protein 14 homolog A (771 aa).

The tract at residues 23–49 (PKDYLLSESEDEGDNDGERKHQKLLEA) is disordered. Residues serine 29, serine 31, serine 52, serine 77, and serine 81 each carry the phosphoserine modification. Residues 40-67 (ERKHQKLLEAISSLDGKNRRKLAERSEA) are a coiled coil. A Glycyl lysine isopeptide (Lys-Gly) (interchain with G-Cter in SUMO2) cross-link involves residue lysine 122. Threonine 205 bears the Phosphothreonine mark. Coiled coils occupy residues 216–290 (SLEE…EKAR) and 317–347 (LEARQAMQEQLSKNKELTQKLQVASESEEEE). 2 disordered regions span residues 334–355 (TQKLQVASESEEEEGGTEDVEE) and 367–557 (MNAD…KKEQ). Positions 342-355 (ESEEEEGGTEDVEE) are enriched in acidic residues. Over residues 399-436 (LEAHGVSESEGEERPVAEEEILLREFEERRSLRKRSEL) the composition is skewed to basic and acidic residues. A phosphoserine mark is found at serine 405 and serine 407. Arginine 433 carries the citrulline modification. A phosphoserine mark is found at serine 437 and serine 445. Lysine 449 participates in a covalent cross-link: Glycyl lysine isopeptide (Lys-Gly) (interchain with G-Cter in SUMO2). Serine 453 is modified (phosphoserine). Over residues 504 to 529 (RPERVQTLEELEELGKEECFQNKELP) the composition is skewed to basic and acidic residues. Lysine 519 is covalently cross-linked (Glycyl lysine isopeptide (Lys-Gly) (interchain with G-Cter in SUMO2)). The segment covering 535-544 (GQQSERTPNN) has biased composition (polar residues). The segment covering 547 to 557 (DAPKEKKKKEQ) has biased composition (basic and acidic residues). Serine 569 is subject to Phosphoserine. Citrulline is present on arginine 589. Residue lysine 733 forms a Glycyl lysine isopeptide (Lys-Gly) (interchain with G-Cter in SUMO2) linkage. Residues 740–751 (RSSSRSDLSVIQ) are compositionally biased toward polar residues. Residues 740–771 (RSSSRSDLSVIQRNPKRITTRHKKQLKKCSVD) form a disordered region. Residues 753-771 (NPKRITTRHKKQLKKCSVD) are compositionally biased toward basic residues.

It belongs to the UTP14 family. As to quaternary structure, interacts with DHX37. Citrullinated by PADI4. Ubiquitously expressed.

Its subcellular location is the nucleus. It localises to the nucleolus. Functionally, may be required for ribosome biogenesis. This Homo sapiens (Human) protein is U3 small nucleolar RNA-associated protein 14 homolog A (UTP14A).